Here is a 608-residue protein sequence, read N- to C-terminus: MSCDNKQALSGVTLAAIGVVYGDIGTSPLYTLRECLSGQFGIRAEPAAILGFLSLIFWLLILVVSVKYLSFVMRADNAGEGGILTLMSLATRNASPRWTPVLIILGLIGGSFFYGEVVITPAMSVMSAIEGLSLMAPSLDPYIVPLSVLVLTLLFAIQKHGTAMVGKLFAPIMLTWFLTLAVLGLRSIIQNPEVLGALNPIWALRFFAEYQTTSFFALGAVVLAITGVEALYADMGHFGKNPIRLAWFVVVLPSLVLNYFGQGALLLDNPAAIANPFFLLAPKWALLPLLVLATMATVIASQAVISGVFSLTRQAVRLGYLSPIRIVHTSEQESGQIYIPVINWILYISVVIVIMSFEHSSNLAAAYGIAVTGTMVLTSILFCSVAKNSWHWPTYLVAALFALLLAIDVPLFAANLGKIFSGGWLPLTLGAVMFTLMTSWKSERFQLIRRLNEHGNSLEPMIASLEKSPPTRVAGTAVYMSRVVNVIPHALLHNLKHNKVLHERIILLTLRVEDVPYVHNVRRVCIEQLSPTFWRVVASYGWRETPNMEEIFHRCNAEGLSCRMMETSFFMAHESLIMKERPCAANCLCCCSATPCAQRISSRSRPIG.

12 helical membrane passes run 9-29 (LSGVTLAAIGVVYGDIGTSPL), 46-66 (PAAILGFLSLIFWLLILVVSV), 99-119 (TPVLIILGLIGGSFFYGEVVI), 137-157 (PSLDPYIVPLSVLVLTLLFAI), 165-185 (VGKLFAPIMLTWFLTLAVLGL), 213-233 (TSFFALGAVVLAITGVEALYA), 247-267 (WFVVVLPSLVLNYFGQGALLL), 285-305 (ALLPLLVLATMATVIASQAVI), 337-357 (IYIPVINWILYISVVIVIMSF), 363-383 (LAAAYGIAVTGTMVLTSILFC), 396-416 (LVAALFALLLAIDVPLFAANL), and 419-439 (IFSGGWLPLTLGAVMFTLMTS).

This sequence belongs to the HAK/KUP transporter (TC 2.A.72) family.

The protein localises to the cell inner membrane. It carries out the reaction K(+)(in) + H(+)(in) = K(+)(out) + H(+)(out). In terms of biological role, transport of potassium into the cell. Likely operates as a K(+):H(+) symporter. The chain is Probable potassium transport system protein Kup from Aeromonas salmonicida (strain A449).